Here is a 573-residue protein sequence, read N- to C-terminus: Solute carrier family 41 member 2 (573 aa).

The Extracellular portion of the chain corresponds to 1–162 (MTNSKGRSIT…KESSGIMALQ (162 aa)). Ser136 and Ser137 each carry phosphoserine. Residues 163–183 (ILVPFLLAGFGTVSAGMVLDI) form a helical membrane-spanning segment. At 184-195 (VQHWEVFRKVTE) the chain is on the cytoplasmic side. Residues 196–216 (VFILVPALLGLKGNLEMTLAS) traverse the membrane as a helical segment. Residues 217–245 (RLSTAVNIGKMDSPIEKWNLIIGNLALKQ) lie on the Extracellular side of the membrane. The chain crosses the membrane as a helical span at residues 246 to 266 (VQATVVGFLAAVAAIILGWIP). The Cytoplasmic segment spans residues 267–282 (EGKYYLDHSILLCSSS). Residues 283 to 303 (VATAFIASLLQGIIMVGVIVG) form a helical membrane-spanning segment. The Extracellular segment spans residues 304–313 (SKKTGINPDN). The chain crosses the membrane as a helical span at residues 314–334 (VATPIAASFGDLITLAILAWI). The Cytoplasmic segment spans residues 335 to 347 (SQGLYSCLETYYY). Residues 348 to 368 (ISPLVGVFFLALTPIWIIIAA) traverse the membrane as a helical segment. The Extracellular portion of the chain corresponds to 369 to 376 (KHPATRTV). A helical membrane pass occupies residues 377-397 (LHSGWEPVITAMVISSIGGLI). Residues 398–406 (LDTTVSDPN) lie on the Cytoplasmic side of the membrane. The helical transmembrane segment at 407–427 (LVGIVVYTPVINGIGGNLVAI) threads the bilayer. The Extracellular segment spans residues 428–469 (QASRISTYLHLHSIPGELPDEPKGCYYPFRTFFGPGVNNKSA). Residues 470 to 490 (QVLLLLVIPGHLIFLYTIHLM) form a helical membrane-spanning segment. Topologically, residues 491 to 498 (KSGHTSLT) are cytoplasmic. Residues 499–519 (IIFIVVYLFGAVLQVFTLLWI) traverse the membrane as a helical segment. Over 520–543 (ADWMVHHFWRKGKDPDSFSIPYLT) the chain is Extracellular. The helical transmembrane segment at 544-564 (ALGDLLGTALLALSFHFLWLI) threads the bilayer. The Cytoplasmic segment spans residues 565 to 573 (GDRDGDVGD).

The protein belongs to the SLC41A transporter family.

Its subcellular location is the cell membrane. It carries out the reaction Mg(2+)(in) = Mg(2+)(out). It catalyses the reaction Mn(2+)(in) = Mn(2+)(out). The catalysed reaction is Co(2+)(in) = Co(2+)(out). The enzyme catalyses Ni(2+)(in) = Ni(2+)(out). It carries out the reaction Fe(2+)(in) = Fe(2+)(out). Functionally, acts as a plasma-membrane magnesium transporter. Can also mediate the transport of other divalent metal cations in an order of Ba(2+) &gt; Ni(2+) &gt; Co(2+) &gt; Fe(2+) &gt; Mn(2+). In Homo sapiens (Human), this protein is Solute carrier family 41 member 2 (SLC41A2).